The primary structure comprises 179 residues: ADP-ribosylation factor 1-like 1 (179 aa).

Residue glycine 2 is the site of N-myristoyl glycine attachment. The important for the stable binding to the membranes stretch occupies residues 3 to 16 (LFFSKISSFMFPNI). Residues 24-32 (GLDGAGKTT), 126-129 (NKQD), and alanine 160 contribute to the GTP site.

This sequence belongs to the small GTPase superfamily. Arf family.

It localises to the golgi apparatus membrane. The enzyme catalyses GTP + H2O = GDP + phosphate + H(+). Alternates between an inactive GDP-bound form and an active GTP-bound form. Activated by a guanine nucleotide-exchange factor (GEF) and inactivated by GTPase-activating protein (GAP). In terms of biological role, small GTPase involved in protein trafficking between different compartments. Modulates vesicle budding and uncoating within the Golgi complex. In its GTP-bound form, triggers the recruitment of coatomer proteins to the Golgi membrane. The hydrolysis of ARF1-bound GTP, which is mediated by ARFGAPs proteins, is required for dissociation of coat proteins from Golgi membranes and vesicles. In Caenorhabditis elegans, this protein is ADP-ribosylation factor 1-like 1 (arf-1.1).